Here is a 231-residue protein sequence, read N- to C-terminus: Ribose-5-phosphate isomerase A (231 aa).

Substrate is bound by residues 31-34 (SGST), 87-90 (DGAD), and 100-103 (KGGG). Glu-109 serves as the catalytic Proton acceptor. Substrate is bound at residue Lys-127.

Belongs to the ribose 5-phosphate isomerase family. Homodimer.

It catalyses the reaction aldehydo-D-ribose 5-phosphate = D-ribulose 5-phosphate. Its pathway is carbohydrate degradation; pentose phosphate pathway; D-ribose 5-phosphate from D-ribulose 5-phosphate (non-oxidative stage): step 1/1. Functionally, catalyzes the reversible conversion of ribose-5-phosphate to ribulose 5-phosphate. The protein is Ribose-5-phosphate isomerase A of Chlamydia pneumoniae (Chlamydophila pneumoniae).